Consider the following 348-residue polypeptide: UDP-3-O-acylglucosamine N-acyltransferase (348 aa).

His-257 serves as the catalytic Proton acceptor.

It belongs to the transferase hexapeptide repeat family. LpxD subfamily. Homotrimer.

The catalysed reaction is a UDP-3-O-[(3R)-3-hydroxyacyl]-alpha-D-glucosamine + a (3R)-hydroxyacyl-[ACP] = a UDP-2-N,3-O-bis[(3R)-3-hydroxyacyl]-alpha-D-glucosamine + holo-[ACP] + H(+). Its pathway is bacterial outer membrane biogenesis; LPS lipid A biosynthesis. Its function is as follows. Catalyzes the N-acylation of UDP-3-O-acylglucosamine using 3-hydroxyacyl-ACP as the acyl donor. Is involved in the biosynthesis of lipid A, a phosphorylated glycolipid that anchors the lipopolysaccharide to the outer membrane of the cell. This is UDP-3-O-acylglucosamine N-acyltransferase from Bartonella quintana (strain Toulouse) (Rochalimaea quintana).